Consider the following 464-residue polypeptide: ATP synthase subunit beta (464 aa).

148–155 (GGAGVGKT) is a binding site for ATP.

Belongs to the ATPase alpha/beta chains family. F-type ATPases have 2 components, CF(1) - the catalytic core - and CF(0) - the membrane proton channel. CF(1) has five subunits: alpha(3), beta(3), gamma(1), delta(1), epsilon(1). CF(0) has three main subunits: a(1), b(2) and c(9-12). The alpha and beta chains form an alternating ring which encloses part of the gamma chain. CF(1) is attached to CF(0) by a central stalk formed by the gamma and epsilon chains, while a peripheral stalk is formed by the delta and b chains.

The protein resides in the cell inner membrane. It carries out the reaction ATP + H2O + 4 H(+)(in) = ADP + phosphate + 5 H(+)(out). Produces ATP from ADP in the presence of a proton gradient across the membrane. The catalytic sites are hosted primarily by the beta subunits. In Acinetobacter baylyi (strain ATCC 33305 / BD413 / ADP1), this protein is ATP synthase subunit beta.